Here is a 427-residue protein sequence, read N- to C-terminus: Glutamate-1-semialdehyde 2,1-aminomutase (427 aa).

N6-(pyridoxal phosphate)lysine is present on lysine 268.

The protein belongs to the class-III pyridoxal-phosphate-dependent aminotransferase family. HemL subfamily. Pyridoxal 5'-phosphate serves as cofactor.

The protein resides in the cytoplasm. The catalysed reaction is (S)-4-amino-5-oxopentanoate = 5-aminolevulinate. The protein operates within porphyrin-containing compound metabolism; protoporphyrin-IX biosynthesis; 5-aminolevulinate from L-glutamyl-tRNA(Glu): step 2/2. This Methanococcus maripaludis (strain C6 / ATCC BAA-1332) protein is Glutamate-1-semialdehyde 2,1-aminomutase.